The chain runs to 544 residues: MNKRAMLGAIGLAFGLMAWPFGASAKGKSMVWNEQWKTPSFVSGSLLGRCSQELVYRYLDQEKNTFQLGGQARERLSLIGNKLDELGHTVMRFEQAIAASLCMGAVLVAHVNDGELSSLSGTLIPNLDKRTLKTEAAISIQQAEMIAKQDVADRVTKERPAAEEGKPTRLVIYPDEETPRLAYEVNVRFLTPVPGNWIYMIDAADGKVLNKWNQMDEAKPGGAQPVAGTSTVGVGRGVLGDQKYINTTYSSYYGYYYLQDNTRGSGIFTYDGRNRTVLPGSLWADGDNQFFASYDAAAVDAHYYAGVVYDYYKNVHGRLSYDGSNAAIRSTVHYGRGYNNAFWNGSQMVYGDGDGQTFLPFSGGIDVVGHELTHAVTDYTAGLVYQNESGAINEAMSDIFGTLVEFYANRNPDWEIGEDIYTPGVAGDALRSMSDPAKYGDPDHYSKRYTGTQDNGGVHTNSGIINKAAYLLSQGGVHYGVSVTGIGRDKMGKIFYRALVYYLTPTSNFSQLRAACVQAAADLYGSTSQEVNSVKQAFNAVGVY.

The signal sequence occupies residues 1-25 (MNKRAMLGAIGLAFGLMAWPFGASA). Positions 26–225 (KGKSMVWNEQ…DEAKPGGAQP (200 aa)) are cleaved as a propeptide — activation peptide. 4 residues coordinate Ca(2+): Asp285, Asp287, Gln289, and Asp366. His370 is a Zn(2+) binding site. The active site involves Glu371. Residues His374 and Glu394 each coordinate Zn(2+). Ca(2+)-binding residues include Glu405, Asn411, Asp413, Glu415, Glu418, Tyr421, Thr422, Val425, and Asp428. The active-site Proton donor is the His459.

Belongs to the peptidase M4 family. Requires Ca(2+) as cofactor. The cofactor is Zn(2+).

It is found in the secreted. It catalyses the reaction Similar, but not identical, to that of thermolysin.. Functionally, extracellular zinc metalloprotease. In Bacillus caldolyticus, this protein is Bacillolysin (npr).